The primary structure comprises 308 residues: uncharacterized protein (308 aa).

Residues 212–242 adopt a coiled-coil conformation; the sequence is EADKMTIDYMRELDNLQRQYDGLVDEDKALH.

This is an uncharacterized protein from Ostreid herpesvirus 1 (isolate France) (OsHV-1).